A 298-amino-acid chain; its full sequence is Protease HtpX (298 aa).

2 consecutive transmembrane segments (helical) span residues 4 to 24 and 38 to 58; these read IGLF…TMNL and LGNL…VSLA. His-145 serves as a coordination point for Zn(2+). Residue Glu-146 is part of the active site. His-149 serves as a coordination point for Zn(2+). The next 2 membrane-spanning stretches (helical) occupy residues 160 to 180 and 194 to 214; these read LLQG…AYVV and ITFI…ASMI. Glu-223 is a binding site for Zn(2+).

The protein belongs to the peptidase M48B family. Zn(2+) is required as a cofactor.

The protein localises to the cell inner membrane. The sequence is that of Protease HtpX from Hydrogenovibrio crunogenus (strain DSM 25203 / XCL-2) (Thiomicrospira crunogena).